Here is a 251-residue protein sequence, read N- to C-terminus: 5'-nucleotidase SurE (251 aa).

Positions 8, 9, 39, and 91 each coordinate a divalent metal cation.

This sequence belongs to the SurE nucleotidase family. The cofactor is a divalent metal cation.

It is found in the cytoplasm. The catalysed reaction is a ribonucleoside 5'-phosphate + H2O = a ribonucleoside + phosphate. Nucleotidase that shows phosphatase activity on nucleoside 5'-monophosphates. The protein is 5'-nucleotidase SurE of Methylococcus capsulatus (strain ATCC 33009 / NCIMB 11132 / Bath).